Here is a 146-residue protein sequence, read N- to C-terminus: Prefoldin subunit alpha (146 aa).

Belongs to the prefoldin alpha subunit family. As to quaternary structure, heterohexamer of two alpha and four beta subunits.

The protein resides in the cytoplasm. In terms of biological role, molecular chaperone capable of stabilizing a range of proteins. Seems to fulfill an ATP-independent, HSP70-like function in archaeal de novo protein folding. The sequence is that of Prefoldin subunit alpha from Methanobrevibacter smithii (strain ATCC 35061 / DSM 861 / OCM 144 / PS).